A 1294-amino-acid chain; its full sequence is RNA replication protein (1294 aa).

The region spanning 59–224 is the Alphavirus-like MT domain; sequence NPFAVKVHSH…SHEFKQLEWL (166 aa). The (+)RNA virus helicase ATP-binding domain occupies 541-698; sequence LKKQSKDWLA…TYQPFCRYYL (158 aa). 570–577 contributes to the ATP binding site; the sequence is GAGGSGKS. Positions 699–832 constitute a (+)RNA virus helicase C-terminal domain; the sequence is NITHRNKPDL…CVREEKMNEI (134 aa). The 108-residue stretch at 1071 to 1178 folds into the RdRp catalytic domain; that stretch reads RTCFSNDFTA…DYVASVKPSF (108 aa).

The protein belongs to the potexvirus/carlavirus RNA replication protein family.

The catalysed reaction is RNA(n) + a ribonucleoside 5'-triphosphate = RNA(n+1) + diphosphate. It catalyses the reaction ATP + H2O = ADP + phosphate + H(+). Functionally, RNA replication. The central part of this protein possibly functions as an ATP-binding helicase. This is RNA replication protein from Trifolium (WCMV).